A 579-amino-acid polypeptide reads, in one-letter code: MISCSEEGSNKILVAISLDRDESQNVLSWAINVLAKPSDTVVALHLLVGEEPRKLPMKKKKRTQIRHAKAHVISMLGEFAYTCCHNQVNLEAKVGFSSNIGRGLIDEVKSISAHYLVLSRPTTHEFRIWNDIKRYVSDFAPSSCSVVLVGNQRKPHKDCYSDSAISLDINSEKYSPRSVLNTLSRDSLSSSGDDASSFNGSMVSSSFASPSDKPKHKSISPYKFISSLIMNSPLRKWRGSETKNKPKPQPLIQCFTYNEISKATNDFHQGNIVGIGGYSEVYRGDLWDGRRIAVKRLAKESGDMNKEKEFLTELGIISHVSHPNTALLLGCCVEKGLYLVFRFSENGTLYSALHENENGSLDWPVRYKIAVGVARGLHYLHKRCNHRIIHRDIKSSNVLLGPDYEPQITDFGLAKWLPNKWTHHAVIPVEGTFGYLAPESLMQGTIDEKTDIYAFGILLLEIITGRRPVNPTQKHILLWAKPAMETGNTSELVDPKLQDKYDDQQMNKLVLTASHCVQQSPILRPTMTQVLELLTNGNEAEIAKSWRMPKDMTNDDDDNNEWDDYSMIFGYDVPSDSSF.

T256 carries the phosphothreonine modification. The Protein kinase domain maps to 267-542 (FHQGNIVGIG…LLTNGNEAEI (276 aa)). Residues 273-281 (VGIGGYSEV) and K295 contribute to the ATP site. D392 (proton acceptor) is an active-site residue. Residue S396 is modified to Phosphoserine. Phosphothreonine is present on T432.

This sequence belongs to the protein kinase superfamily. Ser/Thr protein kinase family.

The enzyme catalyses L-seryl-[protein] + ATP = O-phospho-L-seryl-[protein] + ADP + H(+). It catalyses the reaction L-threonyl-[protein] + ATP = O-phospho-L-threonyl-[protein] + ADP + H(+). In Arabidopsis thaliana (Mouse-ear cress), this protein is Probable receptor-like serine/threonine-protein kinase At5g57670.